The following is a 205-amino-acid chain: Small ribosomal subunit protein uS4 (205 aa).

Positions 95–163 constitute an S4 RNA-binding domain; it reads RRLDNVVYRL…FKENLESRDP (69 aa).

It belongs to the universal ribosomal protein uS4 family. In terms of assembly, part of the 30S ribosomal subunit. Contacts protein S5. The interaction surface between S4 and S5 is involved in control of translational fidelity.

One of the primary rRNA binding proteins, it binds directly to 16S rRNA where it nucleates assembly of the body of the 30S subunit. In terms of biological role, with S5 and S12 plays an important role in translational accuracy. This is Small ribosomal subunit protein uS4 from Persephonella marina (strain DSM 14350 / EX-H1).